Reading from the N-terminus, the 318-residue chain is Protein-L-histidine N-pros-methyltransferase (318 aa).

The signal sequence occupies residues 1–18 (MRLLAGWLCLSLASVWLA). Asn35 is a glycosylation site (N-linked (GlcNAc...) asparagine). Residues Glu174, Asn210, and Tyr295 each coordinate S-adenosyl-L-homocysteine.

It belongs to the METTL9 family.

It localises to the endoplasmic reticulum. Its subcellular location is the mitochondrion. It carries out the reaction L-histidyl-[protein] + S-adenosyl-L-methionine = N(pros)-methyl-L-histidyl-[protein] + S-adenosyl-L-homocysteine + H(+). Protein-histidine N-methyltransferase that specifically catalyzes 1-methylhistidine (pros-methylhistidine) methylation of target proteins. Specifically methylates the second His of proteins with a His-x-His (HxH) motif (where 'x' is preferably a small amino acid), while exploiting the first one as a recognition signature. Catalyzes methylation of target proteins such as S100A9, NDUFB3, SLC39A5, SLC39A7, ARMC6 and DNAJB12; 1-methylhistidine modification may affect the binding of zinc and other metals to its target proteins. Constitutes the main methyltransferase for the 1-methylhistidine modification in cell. The chain is Protein-L-histidine N-pros-methyltransferase from Bos taurus (Bovine).